The primary structure comprises 126 residues: Aspartate 1-decarboxylase (126 aa).

S25 (schiff-base intermediate with substrate; via pyruvic acid) is an active-site residue. S25 bears the Pyruvic acid (Ser) mark. Residue T57 participates in substrate binding. Y58 (proton donor) is an active-site residue. 73-75 provides a ligand contact to substrate; sequence GGA.

This sequence belongs to the PanD family. Heterooctamer of four alpha and four beta subunits. Pyruvate is required as a cofactor. Is synthesized initially as an inactive proenzyme, which is activated by self-cleavage at a specific serine bond to produce a beta-subunit with a hydroxyl group at its C-terminus and an alpha-subunit with a pyruvoyl group at its N-terminus.

The protein localises to the cytoplasm. The enzyme catalyses L-aspartate + H(+) = beta-alanine + CO2. It participates in cofactor biosynthesis; (R)-pantothenate biosynthesis; beta-alanine from L-aspartate: step 1/1. Its function is as follows. Catalyzes the pyruvoyl-dependent decarboxylation of aspartate to produce beta-alanine. The sequence is that of Aspartate 1-decarboxylase from Acinetobacter baumannii (strain ACICU).